We begin with the raw amino-acid sequence, 233 residues long: Cytidylate kinase (233 aa).

Gly15–Ser23 serves as a coordination point for ATP. Residues Gln183 to Glu200 show a composition bias toward basic and acidic residues. The tract at residues Gln183 to Val203 is disordered.

It belongs to the cytidylate kinase family. Type 1 subfamily.

The protein resides in the cytoplasm. The catalysed reaction is CMP + ATP = CDP + ADP. It catalyses the reaction dCMP + ATP = dCDP + ADP. In Geobacter sp. (strain M21), this protein is Cytidylate kinase.